We begin with the raw amino-acid sequence, 234 residues long: GTP-binding protein YPT52 (234 aa).

GTP contacts are provided by residues 10–17 (GDSSVGKS), 66–70 (DTAGQ), and 111–114 (NKVG). Disordered regions lie at residues 131 to 151 (QETP…EEQK) and 206 to 234 (NRQI…SCCS). Over residues 132-142 (ETPSTETSPDS) the composition is skewed to polar residues. A phosphoserine mark is found at S139 and S142. K151 participates in a covalent cross-link: Glycyl lysine isopeptide (Lys-Gly) (interchain with G-Cter in ubiquitin). The segment covering 217 to 234 (VDINLQRPSTNDPTSCCS) has biased composition (polar residues). S-geranylgeranyl cysteine attachment occurs at residues C232 and C233.

It belongs to the small GTPase superfamily. Rab family. In terms of assembly, interacts with ROY1, YIF1, YIP3, YIP4 and YIP5.

It localises to the cell membrane. The protein resides in the endoplasmic reticulum. Functionally, required for transport in the endocytic pathway and for correct sorting of the vacuolar hydrolases suggesting a possible intersection of the endocytic with the vacuolar sorting pathway. May be involved in recruiting the MON1-CCZ1 complex to membranes enriched in phosphatidylinositol 3-phosphate (PtdIns[3]P) or other charged lipids, leading to recruitment of YPT7. This is GTP-binding protein YPT52 (YPT52) from Saccharomyces cerevisiae (strain ATCC 204508 / S288c) (Baker's yeast).